The chain runs to 345 residues: L-threonine 3-dehydrogenase (345 aa).

Cys42 serves as a coordination point for Zn(2+). Residues Thr44 and His47 each act as charge relay system in the active site. The Zn(2+) site is built by His67, Glu68, Cys97, Cys100, Cys103, and Cys111. Residues Ile179, Asp199, Arg204, 266 to 268 (LGI), and 290 to 291 (IY) contribute to the NAD(+) site.

The protein belongs to the zinc-containing alcohol dehydrogenase family. Homotetramer. It depends on Zn(2+) as a cofactor.

Its subcellular location is the cytoplasm. The catalysed reaction is L-threonine + NAD(+) = (2S)-2-amino-3-oxobutanoate + NADH + H(+). The protein operates within amino-acid degradation; L-threonine degradation via oxydo-reductase pathway; glycine from L-threonine: step 1/2. Its function is as follows. Catalyzes the NAD(+)-dependent oxidation of L-threonine to 2-amino-3-ketobutyrate. The sequence is that of L-threonine 3-dehydrogenase from Sinorhizobium fredii (strain NBRC 101917 / NGR234).